Consider the following 486-residue polypeptide: MNGTLDHPDQPDLDAIKMFVGQVPRTWSEKDLRELFEQYGAVYEINVLRDRSQNPPQSKGCCFVTFYTRKAALEAQNALHNMKVLPGMHHPIQMKPADSEKNNAVEDRKLFIGMISKKCTENDIRVMFSSFGQIEECRILRGPDGLSRGCAFVTFTTRAMAQTAIKAMHQAQTMEGCSSPMVVKFADTQKDKEQKRMAQQLQQQMQQISAASVWGNLAGLNTLGPQYLALYLQLLQQTASSGNLNTLSSLHPMGGLNAMQLQNLAALAAAASAAQNTPSGTNALTTSSSPLSVLTSSGSSPSSSSSNSVNPIASLGALQTLAGATAGLNVGSLAGMAALNGGLGSSGLSNGTGSTMEALTQAYSGIQQYAAAALPTLYNQNLLTQQSIGAAGSQKEGPEGANLFIYHLPQEFGDQDLLQMFMPFGNVVSAKVFIDKQTNLSKCFGFVSYDNPVSAQAAIQSMNGFQIGMKRLKVQLKRSKNDSKPY.

Position 1 is an N-acetylmethionine (Met1). A Phosphothreonine modification is found at Thr4. RRM domains follow at residues 16–99 and 108–188; these read IKMF…PADS and RKLF…FADT. Residue Lys109 forms a Glycyl lysine isopeptide (Lys-Gly) (interchain with G-Cter in SUMO2) linkage. A phosphoserine mark is found at Ser179 and Ser302. Residues 277–309 are disordered; the sequence is TPSGTNALTTSSSPLSVLTSSGSSPSSSSSNSV. A compositionally biased stretch (low complexity) spans 284-309; that stretch reads LTTSSSPLSVLTSSGSSPSSSSSNSV. Residues 401–479 form the RRM 3 domain; it reads ANLFIYHLPQ…KRLKVQLKRS (79 aa).

This sequence belongs to the CELF/BRUNOL family. As to quaternary structure, component of an EIF2 complex at least composed of CELF1/CUGBP1, CALR, CALR3, EIF2S1, EIF2S2, HSP90B1 and HSPA5. Associates with polysomes. Interacts with HNRNPH1; the interaction in RNA-dependent. Interacts with PARN. Phosphorylated. Its phosphorylation status increases in senescent cells. In terms of tissue distribution, ubiquitous.

Its subcellular location is the nucleus. The protein localises to the cytoplasm. In terms of biological role, RNA-binding protein implicated in the regulation of several post-transcriptional events. Involved in pre-mRNA alternative splicing, mRNA translation and stability. Mediates exon inclusion and/or exclusion in pre-mRNA that are subject to tissue-specific and developmentally regulated alternative splicing. Specifically activates exon 5 inclusion of cardiac isoforms of TNNT2 during heart remodeling at the juvenile to adult transition. Acts both as an activator and as a repressor of a pair of coregulated exons: promotes inclusion of the smooth muscle (SM) exon but exclusion of the non-muscle (NM) exon in actinin pre-mRNAs. Activates SM exon 5 inclusion by antagonizing the repressive effect of PTB. Promotes exclusion of exon 11 of the INSR pre-mRNA. Inhibits, together with HNRNPH1, insulin receptor (IR) pre-mRNA exon 11 inclusion in myoblast. Increases translation and controls the choice of translation initiation codon of CEBPB mRNA. Increases mRNA translation of CEBPB in aging liver. Increases translation of CDKN1A mRNA by antagonizing the repressive effect of CALR3. Mediates rapid cytoplasmic mRNA deadenylation. Recruits the deadenylase PARN to the poly(A) tail of EDEN-containing mRNAs to promote their deadenylation. Required for completion of spermatogenesis. Binds to (CUG)n triplet repeats in the 3'-UTR of transcripts such as DMPK and to Bruno response elements (BREs). Binds to muscle-specific splicing enhancer (MSE) intronic sites flanking the alternative exon 5 of TNNT2 pre-mRNA. Binds to AU-rich sequences (AREs or EDEN-like) localized in the 3'-UTR of JUN and FOS mRNAs. Binds to the IR RNA. Binds to the 5'-region of CDKN1A and CEBPB mRNAs. Binds with the 5'-region of CEBPB mRNA in aging liver. May be a specific regulator of miRNA biogenesis. Binds to primary microRNA pri-MIR140 and, with CELF2, negatively regulates the processing to mature miRNA. The polypeptide is CUGBP Elav-like family member 1 (CELF1) (Homo sapiens (Human)).